A 230-amino-acid chain; its full sequence is Demethylmenaquinone methyltransferase (230 aa).

Residues T57, D77, 101 to 102, and S118 each bind S-adenosyl-L-methionine; that span reads DI.

Belongs to the class I-like SAM-binding methyltransferase superfamily. MenG/UbiE family.

The catalysed reaction is a 2-demethylmenaquinol + S-adenosyl-L-methionine = a menaquinol + S-adenosyl-L-homocysteine + H(+). The protein operates within quinol/quinone metabolism; menaquinone biosynthesis; menaquinol from 1,4-dihydroxy-2-naphthoate: step 2/2. Methyltransferase required for the conversion of demethylmenaquinol (DMKH2) to menaquinol (MKH2). The polypeptide is Demethylmenaquinone methyltransferase (Chlamydia felis (strain Fe/C-56) (Chlamydophila felis)).